The primary structure comprises 321 residues: Glucokinase (321 aa).

An ATP-binding site is contributed by 8–13; it reads GDVGGT.

Belongs to the bacterial glucokinase family.

It localises to the cytoplasm. The catalysed reaction is D-glucose + ATP = D-glucose 6-phosphate + ADP + H(+). This is Glucokinase from Salmonella agona (strain SL483).